The following is a 580-amino-acid chain: Aspartate--tRNA ligase (580 aa).

Position 173 (glutamate 173) interacts with L-aspartate. The interval glutamine 195 to lysine 198 is aspartate. Arginine 217 is an L-aspartate binding site. ATP contacts are provided by residues arginine 217 to glutamate 219 and glutamine 226. Histidine 443 contributes to the L-aspartate binding site. Glutamate 477 is a binding site for ATP. Arginine 484 contacts L-aspartate. Residue glycine 529–arginine 532 coordinates ATP.

It belongs to the class-II aminoacyl-tRNA synthetase family. Type 1 subfamily. Homodimer.

Its subcellular location is the cytoplasm. The enzyme catalyses tRNA(Asp) + L-aspartate + ATP = L-aspartyl-tRNA(Asp) + AMP + diphosphate. In terms of biological role, catalyzes the attachment of L-aspartate to tRNA(Asp) in a two-step reaction: L-aspartate is first activated by ATP to form Asp-AMP and then transferred to the acceptor end of tRNA(Asp). This chain is Aspartate--tRNA ligase, found in Malacoplasma penetrans (strain HF-2) (Mycoplasma penetrans).